The sequence spans 587 residues: Kelch-like protein 3 (587 aa).

S10 bears the Phosphoserine mark. The BTB domain occupies 50-117 (CDVMIVAEDV…VYTAEIEVTE (68 aa)). The BACK domain maps to 152–254 (CLGIRAFADV…PRDYLVQTVE (103 aa)). The residue at position 295 (T295) is a Phosphothreonine. Kelch repeat units follow at residues 302 to 347 (VMIV…FMAG), 348 to 394 (HVYA…VLND), 396 to 441 (LYAV…VVEG), 442 to 490 (KLYA…VLSG), 491 to 537 (QLYA…AVNG), and 539 to 585 (LYVV…VIHK). T375 carries the post-translational modification Phosphothreonine. S376 and S433 each carry phosphoserine.

This sequence belongs to the KLHL3 family. As to quaternary structure, homodimer. Component of the BCR(KLHL3) E3 ubiquitin ligase complex, at least composed of CUL3 and KLHL3 and RBX1. Interacts with CLDN8. Phosphorylation at Ser-433 by PKA or PKC decreases the interaction with WNK1 and WNK4, leading to inhibit their degradation by the BCR(KLHL3) complex. Phosphorylated at Ser-433 by PKC in response to angiotensin II signaling, decreasing ability to promote degradation of WNK1 and WNK4, leading to activation of Na-Cl cotransporter SLC12A3/NCC. Phosphorylation at Ser-433 is increased by insulin. Dephosphorylated at Ser-433 by calcineurin PPP3CA, promoting degradation of WNK1 and WNK4.

The protein localises to the cytoplasm. It is found in the cytoskeleton. Its subcellular location is the cytosol. It functions in the pathway protein modification; protein ubiquitination. Functionally, substrate-specific adapter of a BCR (BTB-CUL3-RBX1) E3 ubiquitin ligase complex that acts as a regulator of ion transport in the distal nephron. The BCR(KLHL3) complex acts by mediating ubiquitination and degradation of WNK1 and WNK4, two activators of Na-Cl cotransporter SLC12A3/NCC in distal convoluted tubule cells of kidney, thereby regulating NaCl reabsorption. The BCR(KLHL3) complex also mediates ubiquitination and degradation of WNK3. The BCR(KLHL3) complex also mediates ubiquitination of CLDN8, a tight-junction protein required for paracellular chloride transport in the kidney, leading to its degradation. The sequence is that of Kelch-like protein 3 (KLHL3) from Pongo abelii (Sumatran orangutan).